The following is a 192-amino-acid chain: UPF0312 protein PSPTO_5071 (192 aa).

The first 23 residues, 1–23 (MLKKSLAALALGTALLSAGQAMA), serve as a signal peptide directing secretion.

It belongs to the UPF0312 family. Type 1 subfamily.

The protein localises to the periplasm. This is UPF0312 protein PSPTO_5071 from Pseudomonas syringae pv. tomato (strain ATCC BAA-871 / DC3000).